Here is a 456-residue protein sequence, read N- to C-terminus: MSNSAMSVVILAAGKGTRMYSDLPKVLHTLAGKPMVQHVIDAANDLGACAVHLVYGHGGDLLRQTLHEDNLNWVLQAEQLGTGHAMQQAAPFFNDDEDILMLYGDVPLISVETLQRLRAAKPQGGIGLLTVKLDDPTGYGRITRENGQVTGIVEHKDASEAQRQIQEINTGILIAGGADLKRWLAKLTNNNAQGEYYITDIIAMAHQEGHQIVAVHPQRLSEVEGVNNRLQLARLERVYQAEQAEKLLLAGVMLRDPARFDLRGTLQHGRDVEIDTNVILEGNVVLGDRVKIGAGCVIKNSTIGDDCEISPYSVVEDAQLQAACTIGPFARLRPGAELLEGAHVGNFVEMKKARLGKGSKAGHLTYLGDAEIGDNVNIGAGTITCNYDGANKHKTIIGDDVFVGSDTQLVAPVTVGNGVTIAAGTTVTRNIADNELVLSRVPQVHKQGWQRPVKKK.

Positions 1-229 (MSNSAMSVVI…LSEVEGVNNR (229 aa)) are pyrophosphorylase. UDP-N-acetyl-alpha-D-glucosamine contacts are provided by residues 11–14 (LAAG), Lys25, Gln76, 81–82 (GT), 103–105 (YGD), Gly140, Glu154, Asn169, and Asn227. Mg(2+) is bound at residue Asp105. Position 227 (Asn227) interacts with Mg(2+). The linker stretch occupies residues 230–250 (LQLARLERVYQAEQAEKLLLA). Residues 251–456 (GVMLRDPARF…QGWQRPVKKK (206 aa)) are N-acetyltransferase. Residues Arg333 and Lys351 each coordinate UDP-N-acetyl-alpha-D-glucosamine. His363 acts as the Proton acceptor in catalysis. Positions 366 and 377 each coordinate UDP-N-acetyl-alpha-D-glucosamine. Residues Ala380, 386 to 387 (NY), Ser405, Ala423, and Arg440 each bind acetyl-CoA.

It in the N-terminal section; belongs to the N-acetylglucosamine-1-phosphate uridyltransferase family. The protein in the C-terminal section; belongs to the transferase hexapeptide repeat family. Homotrimer. Mg(2+) is required as a cofactor.

It localises to the cytoplasm. It carries out the reaction alpha-D-glucosamine 1-phosphate + acetyl-CoA = N-acetyl-alpha-D-glucosamine 1-phosphate + CoA + H(+). The enzyme catalyses N-acetyl-alpha-D-glucosamine 1-phosphate + UTP + H(+) = UDP-N-acetyl-alpha-D-glucosamine + diphosphate. It functions in the pathway nucleotide-sugar biosynthesis; UDP-N-acetyl-alpha-D-glucosamine biosynthesis; N-acetyl-alpha-D-glucosamine 1-phosphate from alpha-D-glucosamine 6-phosphate (route II): step 2/2. Its pathway is nucleotide-sugar biosynthesis; UDP-N-acetyl-alpha-D-glucosamine biosynthesis; UDP-N-acetyl-alpha-D-glucosamine from N-acetyl-alpha-D-glucosamine 1-phosphate: step 1/1. It participates in bacterial outer membrane biogenesis; LPS lipid A biosynthesis. Catalyzes the last two sequential reactions in the de novo biosynthetic pathway for UDP-N-acetylglucosamine (UDP-GlcNAc). The C-terminal domain catalyzes the transfer of acetyl group from acetyl coenzyme A to glucosamine-1-phosphate (GlcN-1-P) to produce N-acetylglucosamine-1-phosphate (GlcNAc-1-P), which is converted into UDP-GlcNAc by the transfer of uridine 5-monophosphate (from uridine 5-triphosphate), a reaction catalyzed by the N-terminal domain. This chain is Bifunctional protein GlmU, found in Klebsiella pneumoniae subsp. pneumoniae (strain ATCC 700721 / MGH 78578).